Consider the following 458-residue polypeptide: Tubulin beta chain (458 aa).

Gln11, Glu69, Ser138, Gly142, Thr143, Gly144, Asn204, and Asn226 together coordinate GTP. Residue Glu69 coordinates Mg(2+). The tract at residues 426–458 (EAATVEGEEEEDEYAEGGVVNGDQSYDEPYQAA) is disordered. Over residues 431-440 (EGEEEEDEYA) the composition is skewed to acidic residues.

This sequence belongs to the tubulin family. As to quaternary structure, dimer of alpha and beta chains. A typical microtubule is a hollow water-filled tube with an outer diameter of 25 nm and an inner diameter of 15 nM. Alpha-beta heterodimers associate head-to-tail to form protofilaments running lengthwise along the microtubule wall with the beta-tubulin subunit facing the microtubule plus end conferring a structural polarity. Microtubules usually have 13 protofilaments but different protofilament numbers can be found in some organisms and specialized cells. It depends on Mg(2+) as a cofactor.

It is found in the cytoplasm. Its subcellular location is the cytoskeleton. In terms of biological role, tubulin is the major constituent of microtubules, a cylinder consisting of laterally associated linear protofilaments composed of alpha- and beta-tubulin heterodimers. Microtubules grow by the addition of GTP-tubulin dimers to the microtubule end, where a stabilizing cap forms. Below the cap, tubulin dimers are in GDP-bound state, owing to GTPase activity of alpha-tubulin. The chain is Tubulin beta chain (TUBB1) from Pyropia yezoensis (Susabi-nori).